We begin with the raw amino-acid sequence, 228 residues long: MPGARDQGAARARWLGIGLLGLFLLPVSLSLEVSVGKATTIYAVNGTEILLPCTFSSCFGFENLHFWWSYNSSDTYKILIDGTVKNEKSDPKVKLKDDDRITLEGSTKEKMNNISISLKNLEFSDTGKYTCHVKNPKENDFQHQATIFLQVVDKLEEVDNTVTLIILGVVGGVIGLLIFILLVKKFIAFIIKKTQEKKKECLVSSSGNDNTENGLPGSKAEEKAPTKV.

Positions 1–30 (MPGARDQGAARARWLGIGLLGLFLLPVSLS) are cleaved as a signal peptide. An Ig-like C2-type domain is found at 31-148 (LEVSVGKATT…NDFQHQATIF (118 aa)). Topologically, residues 31–162 (LEVSVGKATT…DKLEEVDNTV (132 aa)) are extracellular. 3 N-linked (GlcNAc...) asparagine glycosylation sites follow: N45, N71, and N113. C53 and C131 are disulfide-bonded. Residues 163 to 183 (TLIILGVVGGVIGLLIFILLV) traverse the membrane as a helical segment. Over 184-228 (KKFIAFIIKKTQEKKKECLVSSSGNDNTENGLPGSKAEEKAPTKV) the chain is Cytoplasmic. The disordered stretch occupies residues 198–228 (KKECLVSSSGNDNTENGLPGSKAEEKAPTKV). Residues 203–213 (VSSSGNDNTEN) are compositionally biased toward polar residues. Over residues 219–228 (KAEEKAPTKV) the composition is skewed to basic and acidic residues.

Belongs to the sodium channel auxiliary subunit SCN4B (TC 8.A.17) family. A voltage-gated sodium (Nav) channel consists of an ion-conducting pore-forming alpha subunit functional on its own that is regulated by one or more beta subunits. The beta subunit SCN4B is disulfide-linked to the pore-forming alpha subunit. Interacts with SCN1A; regulatory subunit of SCN1A/Nav1.1. Interacts with SCN2A; regulatory subunit of SCN2A/Nav1.2. In terms of processing, contains an interchain disulfide bond with SCN2A.

The protein localises to the cell membrane. Its function is as follows. Regulatory subunit of multiple voltage-gated sodium (Nav) channels directly mediating the depolarization of excitable membranes. Navs, also called VGSCs (voltage-gated sodium channels) or VDSCs (voltage-dependent sodium channels), operate by switching between closed and open conformations depending on the voltage difference across the membrane. In the open conformation they allow Na(+) ions to selectively pass through the pore, along their electrochemical gradient. The influx of Na+ ions provokes membrane depolarization, initiating the propagation of electrical signals throughout cells and tissues. The accessory beta subunits participate in localization and functional modulation of the Nav channels. Modulates the activity of SCN1A/Nav1.1. Modulates the activity of SCN2A/Nav1.2. The chain is Sodium channel regulatory subunit beta-4 from Bos taurus (Bovine).